The following is a 262-amino-acid chain: Indole-3-glycerol phosphate synthase (262 aa).

It belongs to the TrpC family.

It carries out the reaction 1-(2-carboxyphenylamino)-1-deoxy-D-ribulose 5-phosphate + H(+) = (1S,2R)-1-C-(indol-3-yl)glycerol 3-phosphate + CO2 + H2O. The protein operates within amino-acid biosynthesis; L-tryptophan biosynthesis; L-tryptophan from chorismate: step 4/5. The sequence is that of Indole-3-glycerol phosphate synthase from Leuconostoc mesenteroides subsp. mesenteroides (strain ATCC 8293 / DSM 20343 / BCRC 11652 / CCM 1803 / JCM 6124 / NCDO 523 / NBRC 100496 / NCIMB 8023 / NCTC 12954 / NRRL B-1118 / 37Y).